We begin with the raw amino-acid sequence, 962 residues long: MVTPPPDVPSTSTRSMARDLQENPNRQPGEPRVSEPYHNSIVERIRHIFRTAVSSNRCRTEYQNIDLDCAYITDRIIAIGYPATGIEANFRNSKVQTQQFLTRRHGKGNVKVFNLRGGYYYDADNFDGNVICFDMTDHHPPSLELMAPFCREAKEWLEADDKHVIAVHCKAGKGRTGVMICALLIYINFYPSPRQILDYYSIIRTKNNKGVTIPSQRRYIYYYHKLRERELNYLPLRMQLIGVYVERPPKTWGGGSKIKVEVGNGSTILFKPDPLIISKSNHQRERATWLNNCDTPNEFDTGEQKYHGFVSKRAYCFMVPEDAPVFVEGDVRIDIREIGFLKKFSDGKIGHVWFNTMFACDGGLNGGHFEYVDKTQPYIGDDTSIGRKNGMRRNETPMRKIDPETGNEFESPWQIVNPPGLEKHITEEQAMENYTNYGMIPPRYTISKILHEKHEKGIVKDDYNDRKLPMGDKSYTESGKSGDIRGVGGPFEIPYKAEEHVLTFPVYEMDRALKSKDLNNGMKLHVVLRCVDTRDSKMMEKSEVFGNLAFHNESTRRLQALTQMNPKWRPEPCAFGSKGAEMHYPPSVRYSSNDGKYNGACSENLVSDFFEHRNIAVLNRYCRYFYKQRSTSRSRYPRKFRYCPLIKKHFYIPADTDDVDENGQPFFHSPEHYIKEQEKIDAEKAAKGIENTGPSTSGSSAPGTIKKTEASQSDKVKPATEDELPPARLPDNVRRFPVVGVDFENPEEESCEHKTVESIAGFEPLEHLFHESYHPNTAGNMLRQDYHTDSEVKIAEQEAKAFVDQLLNGQGVLQEFMKQFKVPSDNSFADYVTGQAEVFKAQIALLEQSEDFQRVQANAEEVDLEHTLGEAFERFGHVVEESNGSSKNPKALKTREQMVKETGKDTQKTRNHVLLHLEANHRVQIERRETCPELHPEDKIPRIAHFSENSFSDSNFDQAIYL.

Positions 1-37 are disordered; sequence MVTPPPDVPSTSTRSMARDLQENPNRQPGEPRVSEPY. Positions 58 to 230 constitute a Phosphatase tensin-type domain; the sequence is CRTEYQNIDL…YYYHKLRERE (173 aa). C169 acts as the Phosphocysteine intermediate in catalysis. The C2 tensin-type domain maps to 234–530; sequence LPLRMQLIGV…GMKLHVVLRC (297 aa). Disordered stretches follow at residues 382 to 416 and 689 to 731; these read DTSI…WQIV and IENT…RLPD. Residues 392 to 403 show a composition bias toward basic and acidic residues; that stretch reads RRNETPMRKIDP. Low complexity predominate over residues 692-704; sequence TGPSTSGSSAPGT. Positions 706–720 are enriched in basic and acidic residues; the sequence is KKTEASQSDKVKPAT.

This sequence belongs to the PTEN phosphatase protein family. As to quaternary structure, interacts (via C-terminus) with vab-1 (via kinase domain); the interaction is independent of vab-1 kinase activity. Interacts with arr-1 and mpz-1; the interaction may inhibit daf-18. Interacts (via C-terminus) with daf-2 (via kinase domain). Phosphorylated by vab-1 on tyrosine residues which may promote daf-18 degradation. Expressed in embryo, larvae and in adult germline (at protein level). Expressed at equal levels in the 6 vulva precursor cells (VPCs) of L2 larvae and in the descendant cells of the induced VPCs (at protein level). Expressed in the uterus (at protein level). Expressed in the Z2/Z3 germline precursors, oocytes, several amphid neurons and weakly in the nerve cord (at protein level).

It localises to the perikaryon. Its subcellular location is the cell membrane. It is found in the cell projection. The protein resides in the axon. The protein localises to the dendrite. It localises to the cytoplasm. Its subcellular location is the nucleus. It carries out the reaction a 1,2-diacyl-sn-glycero-3-phospho-(1D-myo-inositol-3,4,5-trisphosphate) + H2O = a 1,2-diacyl-sn-glycero-3-phospho-(1D-myo-inositol-4,5-bisphosphate) + phosphate. The catalysed reaction is O-phospho-L-seryl-[protein] + H2O = L-seryl-[protein] + phosphate. The enzyme catalyses O-phospho-L-threonyl-[protein] + H2O = L-threonyl-[protein] + phosphate. It catalyses the reaction O-phospho-L-tyrosyl-[protein] + H2O = L-tyrosyl-[protein] + phosphate. It carries out the reaction 1,2-dioctanoyl-sn-glycero-3-phospho-(1D-myo-inositol-3,4,5-trisphosphate) + H2O = 1,2-dioctanoyl-sn-glycero-3-phospho-(1D-myo-inositol-4,5-bisphosphate) + phosphate. The catalysed reaction is 1,2-dihexadecanoyl-sn-glycero-3-phospho-(1D-myo-inositol-3,4,5-trisphosphate) + H2O = 1,2-dihexadecanoyl-sn-glycero-3-phospho-(1D-myo-inositol-4,5-bisphosphate) + phosphate. In terms of biological role, acts as a dual-specificity protein phosphatase, dephosphorylating tyrosine-, serine- and threonine-phosphorylated proteins. Also acts as a lipid phosphatase, removing the phosphate in the D3 position of the inositol ring from phosphatidylinositol 3,4,5-trisphosphate. By dephosphorylating PtdIns(3,4,5)P3 antagonizes PtdIns(3,4,5)P3 production by age-1/PI3K and thus, negatively regulates daf-2-mediated processes including dauer formation, longevity, fat metabolism, chemotaxis towards salt, thermotolerance and axon guidance. Similarly, promotes apoptosis during embryonic development by suppressing the recruitment of the prosurvival kinases akt-1/2 to the plasma membrane. In addition, regulates Z2/Z3 germline precursor cell cycle by maintaining them arrested at the G2 stage and by controlling their growth during L1 diapause. After sperm depletion in larvae and adult hermaphrodites, promotes germline stem cell quiescence and oocyte accumulation. By dephosphorylating ephrin-like receptor vab-1 on tyrosine residues, negatively regulates oocyte maturation downstream of vab-1 and upstream of mpk-1, independently of daf-2. Plays a role in postembryonic muscle arm extensions. Required for neurite outgrowth during AIY interneuron embryonic development. Mainly independently of daf-2, negatively regulates vulva induction probably by inhibiting mpk-1 phosphorylation. Both lipid and protein phosphatase activities are required for the regulation of vulva induction. Plays a role in gonad and germline development following the L1 diapause. This is Phosphatidylinositol 3,4,5-trisphosphate 3-phosphatase and dual-specificity protein phosphatase daf-18 from Caenorhabditis elegans.